Consider the following 351-residue polypeptide: MRKIIHVDMDCFFAAVEMRDNPALRDIPIAIGGSRERRGVISTANYPARKFGVRSAMPTGMALKLCPHLTLLPGRFDAYKEASNHIREIFSRYTSRIEPLSLDEAYLDVTDSVHCHGSATLIAQEIRQTIFNELQLTASAGVAPVKFLAKIASDMNKPNGQFVITPAEVPAFLQTLPLAKIPGVGKVSAAKLEAMGLRTCGDVQKCDLVMLLKRFGKFGRILWERSQGIDERDVNSERLRKSVGVERTMAEDIHHWSECEAIIERLYPELERRLAKVKPDLLIARQGVKLKFDDFQQTTQEHVWPRLNKADLIATARKTWDERRGGRGVRLVGLHVTLLDPQMERQLVLGL.

Positions 4 to 185 (IIHVDMDCFF…LPLAKIPGVG (182 aa)) constitute a UmuC domain. Mg(2+) contacts are provided by Asp8 and Asp103. Residue Glu104 is part of the active site.

It belongs to the DNA polymerase type-Y family. As to quaternary structure, monomer. Requires Mg(2+) as cofactor.

It localises to the cytoplasm. It carries out the reaction DNA(n) + a 2'-deoxyribonucleoside 5'-triphosphate = DNA(n+1) + diphosphate. In terms of biological role, poorly processive, error-prone DNA polymerase involved in untargeted mutagenesis. Copies undamaged DNA at stalled replication forks, which arise in vivo from mismatched or misaligned primer ends. These misaligned primers can be extended by PolIV. Exhibits no 3'-5' exonuclease (proofreading) activity. May be involved in translesional synthesis, in conjunction with the beta clamp from PolIII. This Escherichia coli (strain ATCC 8739 / DSM 1576 / NBRC 3972 / NCIMB 8545 / WDCM 00012 / Crooks) protein is DNA polymerase IV.